The following is a 294-amino-acid chain: Shikimate dehydrogenase (NADP(+)) (294 aa).

Shikimate-binding positions include 22-24 and serine 69; that span reads SLS. Lysine 73 functions as the Proton acceptor in the catalytic mechanism. Asparagine 94 and aspartate 111 together coordinate shikimate. NADP(+) contacts are provided by residues 135–139 and leucine 236; that span reads GAGGA. Tyrosine 238 contributes to the shikimate binding site. Position 260 (glycine 260) interacts with NADP(+).

The protein belongs to the shikimate dehydrogenase family. As to quaternary structure, homodimer.

The enzyme catalyses shikimate + NADP(+) = 3-dehydroshikimate + NADPH + H(+). The protein operates within metabolic intermediate biosynthesis; chorismate biosynthesis; chorismate from D-erythrose 4-phosphate and phosphoenolpyruvate: step 4/7. Its function is as follows. Involved in the biosynthesis of the chorismate, which leads to the biosynthesis of aromatic amino acids. Catalyzes the reversible NADPH linked reduction of 3-dehydroshikimate (DHSA) to yield shikimate (SA). This is Shikimate dehydrogenase (NADP(+)) from Streptococcus equi subsp. zooepidemicus (strain H70).